A 701-amino-acid chain; its full sequence is Aryl hydrocarbon receptor repressor (701 aa).

Residues 1-38 (MMIPSGECTYAGRKRRKPIQKRRLTMGTEKSNPSKRHR) form a disordered region. Positions 12-24 (GRKRRKPIQKRRL) are enriched in basic residues. Residues 25–78 (TMGTEKSNPSKRHRDRLNTELDHLASLLPFSPDIISKLDKLSVLRLSVSYLRVK) form the bHLH domain. The region spanning 106–176 (PVQEGRLLLE…RQLHWAMDPP (71 aa)) is the PAS domain. Disordered stretches follow at residues 360–389 (DPKG…QREM) and 409–436 (TEQR…LVPH). Over residues 365-375 (SGDREEDDQKH) the composition is skewed to basic and acidic residues. The segment covering 414–430 (QEGTTKLTRQPSKSEPS) has biased composition (polar residues). Positions 555–701 (ASTTSCVWLG…SKGSDGIFLP (147 aa)) are needed for transcriptional repression. Glycyl lysine isopeptide (Lys-Gly) (interchain with G-Cter in SUMO2) cross-links involve residues Lys-583 and Lys-660.

In terms of assembly, interacts with ARNT, ANKRA2, HDAC4 and HDAC5. Interacts with ARNT; forms a heterodimer with ARNT. Highly expressed in testis and weakly expressed in heart and liver. Highly expressed in small intestine and cecum in a male-dominant sexual dimorphic fashion.

Its subcellular location is the cytoplasm. It localises to the nucleus. In terms of biological role, mediates dioxin toxicity and is involved in regulation of cell growth and differentiation. Represses the transcription activity of AHR by competing with this transcription factor for heterodimer formation with the ARNT and subsequently binding to the xenobiotic response element (XRE) sequence present in the promoter regulatory region of variety of genes. Represses CYP1A1 by binding the XRE sequence and recruiting ANKRA2, HDAC4 and/or HDAC5. Autoregulates its expression by associating with its own XRE site. The protein is Aryl hydrocarbon receptor repressor (Ahrr) of Rattus norvegicus (Rat).